Here is a 235-residue protein sequence, read N- to C-terminus: Phosphoribosylaminoimidazole-succinocarboxamide synthase (235 aa).

It belongs to the SAICAR synthetase family.

The catalysed reaction is 5-amino-1-(5-phospho-D-ribosyl)imidazole-4-carboxylate + L-aspartate + ATP = (2S)-2-[5-amino-1-(5-phospho-beta-D-ribosyl)imidazole-4-carboxamido]succinate + ADP + phosphate + 2 H(+). The protein operates within purine metabolism; IMP biosynthesis via de novo pathway; 5-amino-1-(5-phospho-D-ribosyl)imidazole-4-carboxamide from 5-amino-1-(5-phospho-D-ribosyl)imidazole-4-carboxylate: step 1/2. The polypeptide is Phosphoribosylaminoimidazole-succinocarboxamide synthase (Clostridium beijerinckii (strain ATCC 51743 / NCIMB 8052) (Clostridium acetobutylicum)).